The primary structure comprises 1165 residues: uncharacterized protein (1165 aa).

The disordered stretch occupies residues 422-442; sequence EAAPPRPPRKSKAPEPTGDKA.

This is an uncharacterized protein from Frog virus 3 (isolate Goorha) (FV-3).